The sequence spans 183 residues: Gamma-crystallin N (183 aa).

4 Beta/gamma crystallin 'Greek key' domains span residues 6-46, 47-89, 95-136, and 138-180; these read GKII…RVET, GAWI…KPVR, YRLE…KVYG, and GAWV…RRVV.

It belongs to the beta/gamma-crystallin family. In terms of assembly, monomer.

In terms of biological role, crystallins are the dominant structural components of the vertebrate eye lens. This is Gamma-crystallin N (crygn) from Xenopus tropicalis (Western clawed frog).